The sequence spans 146 residues: MRLLQFLFRASPATLLLVLCLHLGANKAQENTRRIIIQNFEIPTTANRDEEVTAVLQVKTELKECMVAKVYLTSDVPVEGAFNYKYTRCLCDDYPNTYYWDFHTNRTVQIAAVVDIIRELGICPNDAAVTPISKNRFYTIKTLVVA.

The N-terminal stretch at 1–28 (MRLLQFLFRASPATLLLVLCLHLGANKA) is a signal peptide. The residue at position 29 (Gln29) is a Pyrrolidone carboxylic acid. Disulfide bonds link Cys65–Cys91 and Cys89–Cys123. N-linked (GlcNAc...) asparagine glycosylation is present at Asn105.

Belongs to the PIP family. Monomer. Interacts with AZGP1.

It localises to the secreted. This is Prolactin-inducible protein homolog (PIP) from Macaca fuscata fuscata (Japanese macaque).